The chain runs to 435 residues: Gamma-glutamyl phosphate reductase (435 aa).

Belongs to the gamma-glutamyl phosphate reductase family.

Its subcellular location is the cytoplasm. The enzyme catalyses L-glutamate 5-semialdehyde + phosphate + NADP(+) = L-glutamyl 5-phosphate + NADPH + H(+). Its pathway is amino-acid biosynthesis; L-proline biosynthesis; L-glutamate 5-semialdehyde from L-glutamate: step 2/2. Its function is as follows. Catalyzes the NADPH-dependent reduction of L-glutamate 5-phosphate into L-glutamate 5-semialdehyde and phosphate. The product spontaneously undergoes cyclization to form 1-pyrroline-5-carboxylate. In Parasynechococcus marenigrum (strain WH8102), this protein is Gamma-glutamyl phosphate reductase.